The chain runs to 94 residues: Putative regulatory protein Tmel_0100 (94 aa).

It belongs to the RemA family.

This is Putative regulatory protein Tmel_0100 from Thermosipho melanesiensis (strain DSM 12029 / CIP 104789 / BI429).